The sequence spans 336 residues: Structure-specific endonuclease subunit SLX1 (336 aa).

One can recognise a GIY-YIG domain in the interval 21–104 (SFYGVYLLQS…QHCHETRHIK (84 aa)). A disordered region spans residues 37–57 (FYIGSTPDPPRRLRQHNGDLK). The SLX1-type zinc finger occupies 214-290 (CALCLEPIEQ…PATVNRCCSC (77 aa)).

This sequence belongs to the SLX1 family. As to quaternary structure, forms a heterodimer with SLX4. Requires a divalent metal cation as cofactor.

It is found in the nucleus. Its function is as follows. Catalytic subunit of the SLX1-SLX4 structure-specific endonuclease that resolves DNA secondary structures generated during DNA repair and recombination. Has endonuclease activity towards branched DNA substrates, introducing single-strand cuts in duplex DNA close to junctions with ss-DNA. The polypeptide is Structure-specific endonuclease subunit SLX1 (Scheffersomyces stipitis (strain ATCC 58785 / CBS 6054 / NBRC 10063 / NRRL Y-11545) (Yeast)).